We begin with the raw amino-acid sequence, 536 residues long: Phosphoenolpyruvate carboxykinase (ATP) (536 aa).

Arginine 62, tyrosine 203, and lysine 209 together coordinate substrate. Residues lysine 209, histidine 228, and 244–252 (GLSGTGKTT) each bind ATP. The Mn(2+) site is built by lysine 209 and histidine 228. Aspartate 265 serves as a coordination point for Mn(2+). Residues glutamate 293, arginine 329, 445 to 446 (RI), and threonine 451 contribute to the ATP site. Arginine 329 provides a ligand contact to substrate.

Belongs to the phosphoenolpyruvate carboxykinase (ATP) family. In terms of assembly, monomer. Mn(2+) is required as a cofactor.

The protein localises to the cytoplasm. It catalyses the reaction oxaloacetate + ATP = phosphoenolpyruvate + ADP + CO2. It participates in carbohydrate biosynthesis; gluconeogenesis. Functionally, involved in the gluconeogenesis. Catalyzes the conversion of oxaloacetate (OAA) to phosphoenolpyruvate (PEP) through direct phosphoryl transfer between the nucleoside triphosphate and OAA. The chain is Phosphoenolpyruvate carboxykinase (ATP) from Actinobacillus pleuropneumoniae serotype 7 (strain AP76).